The chain runs to 311 residues: Methionyl-tRNA formyltransferase (311 aa).

S112–P115 contacts (6S)-5,6,7,8-tetrahydrofolate.

This sequence belongs to the Fmt family.

The catalysed reaction is L-methionyl-tRNA(fMet) + (6R)-10-formyltetrahydrofolate = N-formyl-L-methionyl-tRNA(fMet) + (6S)-5,6,7,8-tetrahydrofolate + H(+). Its function is as follows. Attaches a formyl group to the free amino group of methionyl-tRNA(fMet). The formyl group appears to play a dual role in the initiator identity of N-formylmethionyl-tRNA by promoting its recognition by IF2 and preventing the misappropriation of this tRNA by the elongation apparatus. The protein is Methionyl-tRNA formyltransferase of Sinorhizobium fredii (strain NBRC 101917 / NGR234).